The following is a 473-amino-acid chain: Cell division protein FtsP (473 aa).

Residues 1–27 (MSFSRRQFLQASGLAVCLGSLSSSVRA) constitute a signal peptide (tat-type signal).

This sequence belongs to the FtsP family. Post-translationally, predicted to be exported by the Tat system. The position of the signal peptide cleavage has not been experimentally proven.

Its subcellular location is the periplasm. Cell division protein that is required for growth during stress conditions. May be involved in protecting or stabilizing the divisomal assembly under conditions of stress. This is Cell division protein FtsP from Proteus mirabilis (strain HI4320).